Here is a 268-residue protein sequence, read N- to C-terminus: tRNA (guanine-N(1)-)-methyltransferase (268 aa).

Residues Gly-113 and 133–138 each bind S-adenosyl-L-methionine; that span reads IGDYVL. Residues 238–268 are disordered; sequence RCPPDPFAHQGPVYEGDQLERPEGGEQGASR.

Belongs to the RNA methyltransferase TrmD family. As to quaternary structure, homodimer.

It is found in the cytoplasm. The enzyme catalyses guanosine(37) in tRNA + S-adenosyl-L-methionine = N(1)-methylguanosine(37) in tRNA + S-adenosyl-L-homocysteine + H(+). In terms of biological role, specifically methylates guanosine-37 in various tRNAs. This Thermomicrobium roseum (strain ATCC 27502 / DSM 5159 / P-2) protein is tRNA (guanine-N(1)-)-methyltransferase.